The primary structure comprises 515 residues: Maturase K (515 aa).

This sequence belongs to the intron maturase 2 family. MatK subfamily.

The protein localises to the plastid. It is found in the chloroplast. In terms of biological role, usually encoded in the trnK tRNA gene intron. Probably assists in splicing its own and other chloroplast group II introns. The chain is Maturase K from Cedrus atlantica (Atlas cedar).